The sequence spans 146 residues: Large ribosomal subunit protein uL22 (146 aa).

A disordered region spans residues 1-39 (MAETQTTTPKKKAERRAPPPARARKNRPAAPAPGPHASL).

Belongs to the universal ribosomal protein uL22 family. In terms of assembly, part of the 50S ribosomal subunit.

This protein binds specifically to 23S rRNA; its binding is stimulated by other ribosomal proteins, e.g. L4, L17, and L20. It is important during the early stages of 50S assembly. It makes multiple contacts with different domains of the 23S rRNA in the assembled 50S subunit and ribosome. Functionally, the globular domain of the protein is located near the polypeptide exit tunnel on the outside of the subunit, while an extended beta-hairpin is found that lines the wall of the exit tunnel in the center of the 70S ribosome. This is Large ribosomal subunit protein uL22 from Anaeromyxobacter dehalogenans (strain 2CP-1 / ATCC BAA-258).